The sequence spans 332 residues: Anthranilate phosphoribosyltransferase (332 aa).

5-phospho-alpha-D-ribose 1-diphosphate-binding positions include G79, 82 to 83 (GD), T87, 89 to 92 (NIST), 107 to 115 (KHGNRSVSS), and S119. G79 contacts anthranilate. Residue S91 participates in Mg(2+) binding. Position 110 (N110) interacts with anthranilate. Residue R165 participates in anthranilate binding. Residues D223 and E224 each coordinate Mg(2+).

The protein belongs to the anthranilate phosphoribosyltransferase family. Homodimer. The cofactor is Mg(2+).

The enzyme catalyses N-(5-phospho-beta-D-ribosyl)anthranilate + diphosphate = 5-phospho-alpha-D-ribose 1-diphosphate + anthranilate. Its pathway is amino-acid biosynthesis; L-tryptophan biosynthesis; L-tryptophan from chorismate: step 2/5. Functionally, catalyzes the transfer of the phosphoribosyl group of 5-phosphorylribose-1-pyrophosphate (PRPP) to anthranilate to yield N-(5'-phosphoribosyl)-anthranilate (PRA). This is Anthranilate phosphoribosyltransferase from Vibrio vulnificus (strain YJ016).